The chain runs to 65 residues: Large ribosomal subunit protein bL35 (65 aa).

Positions 1 to 26 (MPKIKTVRGAAKRFKKTASGGFKRKQ) are disordered. Positions 10 to 26 (AAKRFKKTASGGFKRKQ) are enriched in basic residues.

Belongs to the bacterial ribosomal protein bL35 family.

This is Large ribosomal subunit protein bL35 from Haemophilus ducreyi (strain 35000HP / ATCC 700724).